Reading from the N-terminus, the 164-residue chain is MKHLPKHVRPRWRYLAVGIEAWPDAGIERSDFQRALWFAAGNLLGDPGSADAGVRVVAYSFRDGRGEALVRARRGTVSRARAAVACVSAVREHPVRVCVRGVSGTMRAARERYLDGLDTPERRSDVAFDGDARDGVCRGENVDVVAGDDGWVGARRRDCGTDGE.

It belongs to the eukaryotic/archaeal RNase P protein component 2 family. As to quaternary structure, consists of a catalytic RNA component and at least 4-5 protein subunits.

The protein resides in the cytoplasm. The catalysed reaction is Endonucleolytic cleavage of RNA, removing 5'-extranucleotides from tRNA precursor.. In terms of biological role, part of ribonuclease P, a protein complex that generates mature tRNA molecules by cleaving their 5'-ends. The protein is Ribonuclease P protein component 2 of Halobacterium salinarum (strain ATCC 29341 / DSM 671 / R1).